Reading from the N-terminus, the 518-residue chain is ATP synthase subunit alpha (518 aa).

Position 169–176 (169–176 (GDRKTGKT)) interacts with ATP.

It belongs to the ATPase alpha/beta chains family. F-type ATPases have 2 components, CF(1) - the catalytic core - and CF(0) - the membrane proton channel. CF(1) has five subunits: alpha(3), beta(3), gamma(1), delta(1), epsilon(1). CF(0) has three main subunits: a(1), b(2) and c(9-12). The alpha and beta chains form an alternating ring which encloses part of the gamma chain. CF(1) is attached to CF(0) by a central stalk formed by the gamma and epsilon chains, while a peripheral stalk is formed by the delta and b chains.

Its subcellular location is the cell membrane. The enzyme catalyses ATP + H2O + 4 H(+)(in) = ADP + phosphate + 5 H(+)(out). In terms of biological role, produces ATP from ADP in the presence of a proton gradient across the membrane. The alpha chain is a regulatory subunit. In Enterococcus hirae (strain ATCC 9790 / DSM 20160 / JCM 8729 / LMG 6399 / NBRC 3181 / NCIMB 6459 / NCDO 1258 / NCTC 12367 / WDCM 00089 / R), this protein is ATP synthase subunit alpha.